The primary structure comprises 777 residues: Myotubularin-related protein 10 (777 aa).

The tract at residues 196-217 (PSGDGGGGGGGGNGAGGGSSQK) is disordered. The span at 197–214 (SGDGGGGGGGGNGAGGGS) shows a compositional bias: gly residues. The 441-residue stretch at 221 to 661 (FETYSDWDRE…THIKLWKLCY (441 aa)) folds into the Myotubularin phosphatase domain. S607 and S751 each carry phosphoserine.

This sequence belongs to the protein-tyrosine phosphatase family. Non-receptor class myotubularin subfamily.

The chain is Myotubularin-related protein 10 (MTMR10) from Homo sapiens (Human).